We begin with the raw amino-acid sequence, 548 residues long: Folylpolyglutamate synthase (548 aa).

An ATP-binding site is contributed by G130 to S133. S157, E234, and H262 together coordinate Mg(2+). Residues R382 and D396 each coordinate ATP.

This sequence belongs to the folylpolyglutamate synthase family. A monovalent cation serves as cofactor.

It localises to the mitochondrion inner membrane. Its subcellular location is the mitochondrion matrix. The protein localises to the cytoplasm. It carries out the reaction (6S)-5,6,7,8-tetrahydrofolyl-(gamma-L-Glu)(n) + L-glutamate + ATP = (6S)-5,6,7,8-tetrahydrofolyl-(gamma-L-Glu)(n+1) + ADP + phosphate + H(+). It participates in cofactor biosynthesis; tetrahydrofolylpolyglutamate biosynthesis. Catalyzes conversion of folates to polyglutamate derivatives allowing concentration of folate compounds in the cell and the intracellular retention of these cofactors, which are important substrates for most of the folate-dependent enzymes that are involved in one-carbon transfer reactions involved in purine, pyrimidine and amino acid synthesis. Required for methionine synthesis and maintenance of intact mitochondrial DNA. Involved in telomere maintenance. This is Folylpolyglutamate synthase from Saccharomyces cerevisiae (strain AWRI796) (Baker's yeast).